The primary structure comprises 133 residues: Ribosome-binding factor A (133 aa).

This sequence belongs to the RbfA family. As to quaternary structure, monomer. Binds 30S ribosomal subunits, but not 50S ribosomal subunits or 70S ribosomes.

The protein resides in the cytoplasm. One of several proteins that assist in the late maturation steps of the functional core of the 30S ribosomal subunit. Associates with free 30S ribosomal subunits (but not with 30S subunits that are part of 70S ribosomes or polysomes). Required for efficient processing of 16S rRNA. May interact with the 5'-terminal helix region of 16S rRNA. The sequence is that of Ribosome-binding factor A from Klebsiella pneumoniae (strain 342).